A 97-amino-acid polypeptide reads, in one-letter code: Citrate lyase acyl carrier protein 2 (97 aa).

Residue Ser-14 is modified to O-(phosphoribosyl dephospho-coenzyme A)serine.

The protein belongs to the CitD family. As to quaternary structure, oligomer with a subunit composition of (alpha,beta,gamma)6.

The protein resides in the cytoplasm. Its function is as follows. Covalent carrier of the coenzyme of citrate lyase. In Salmonella paratyphi A (strain ATCC 9150 / SARB42), this protein is Citrate lyase acyl carrier protein 2.